Consider the following 152-residue polypeptide: MEESPIKFADIDINEILKTLPHRNPFLLIDRVKNIRADYSGIGVKNVSFNEPCFQGHFPERPVYPGVLMIEGMAQTAGVIGIKSVEGTEKPRAVYFLTIDKCKFRKPVLPGQTIEYHMRSIGRRKTMWWFHGDAKVDGVVVAEADVGAMLTD.

Residue His-57 is part of the active site.

It belongs to the thioester dehydratase family. FabZ subfamily.

The protein localises to the cytoplasm. The enzyme catalyses a (3R)-hydroxyacyl-[ACP] = a (2E)-enoyl-[ACP] + H2O. Involved in unsaturated fatty acids biosynthesis. Catalyzes the dehydration of short chain beta-hydroxyacyl-ACPs and long chain saturated and unsaturated beta-hydroxyacyl-ACPs. The polypeptide is 3-hydroxyacyl-[acyl-carrier-protein] dehydratase FabZ (Bradyrhizobium sp. (strain ORS 278)).